A 228-amino-acid chain; its full sequence is Cytidylate kinase (228 aa).

17-25 (GPTASGKGT) is a binding site for ATP.

It belongs to the cytidylate kinase family. Type 1 subfamily.

The protein localises to the cytoplasm. The enzyme catalyses CMP + ATP = CDP + ADP. It carries out the reaction dCMP + ATP = dCDP + ADP. The chain is Cytidylate kinase from Burkholderia ambifaria (strain MC40-6).